The primary structure comprises 277 residues: S-formylglutathione hydrolase FrmB (277 aa).

Residues S145, D221, and H254 each act as charge relay system in the active site.

The protein belongs to the esterase D family.

It catalyses the reaction S-formylglutathione + H2O = formate + glutathione + H(+). Serine hydrolase involved in the detoxification of formaldehyde. Hydrolyzes S-formylglutathione to glutathione and formate. This chain is S-formylglutathione hydrolase FrmB (frmB), found in Escherichia coli O9:H4 (strain HS).